Here is a 123-residue protein sequence, read N- to C-terminus: Amoebiasin-2 (123 aa).

Positions 1–16 are cleaved as a signal peptide; sequence MKQFIFFALLCTSTYA. The short motif at 45-50 is the BC loop element; it reads NPSTGY. Residues 71–81 carry the DE loop motif; sequence EPHPSGMVGFP. Positions 105 to 114 match the FG loop motif; sequence PWEKGKEPLR.

It belongs to the protease inhibitor I42 family. In terms of assembly, monomer. May form homodimer. Interacts with cysteine protease CP2. Interacts with cysteine protease CP5.

The protein localises to the cytoplasmic vesicle. It localises to the lysosome. The protein resides in the phagosome. In terms of biological role, cysteine protease inhibitor. Inhibits cysteine proteases CP1, CP2 and to a lesser extent CP5. This is Amoebiasin-2 from Entamoeba histolytica (strain ATCC 30459 / HM-1:IMSS / ABRM).